The primary structure comprises 129 residues: UPF0102 protein amb4503 (129 aa).

Belongs to the UPF0102 family.

This is UPF0102 protein amb4503 from Paramagnetospirillum magneticum (strain ATCC 700264 / AMB-1) (Magnetospirillum magneticum).